A 295-amino-acid polypeptide reads, in one-letter code: UDP-N-acetylenolpyruvoylglucosamine reductase (295 aa).

The 166-residue stretch at 23–188 (QVGGPADFLA…ISAKFALKPG (166 aa)) folds into the FAD-binding PCMH-type domain. Arg167 is a catalytic residue. The Proton donor role is filled by Ser217. Glu287 is an active-site residue.

This sequence belongs to the MurB family. It depends on FAD as a cofactor.

The protein localises to the cytoplasm. It catalyses the reaction UDP-N-acetyl-alpha-D-muramate + NADP(+) = UDP-N-acetyl-3-O-(1-carboxyvinyl)-alpha-D-glucosamine + NADPH + H(+). The protein operates within cell wall biogenesis; peptidoglycan biosynthesis. Cell wall formation. The protein is UDP-N-acetylenolpyruvoylglucosamine reductase of Streptococcus equi subsp. equi (strain 4047).